The following is a 1196-amino-acid chain: DNA excision repair protein ERCC-5 homolog (1196 aa).

Residues 1–78 (MGVQGLWKLL…RIRPIFVFDG (78 aa)) form an N-domain region. Residue Asp-30 participates in Mg(2+) binding. The segment at 31-67 (ISIWLNQAVKGARDRQGNAIQNAHLLTLFHRLCKLLF) is DNA-binding; may bind to the undamaged single-strand DNA of the DNA repair bubble. Asp-77 provides a ligand contact to Mg(2+). The segment at 79–818 (EAPLLKRQTL…LQLFGIPYIV (740 aa)) is spacer region. Disordered regions lie at residues 152–176 (PLEDNENNSSEEEEEREWEERMNQK), 302–321 (KQEEKKVDSPPQSITFNSSQ), 629–661 (QTTQPSGGSEVNKPAEYNPQDKKVFGSNDSSAM), and 722–758 (AVEEGNSGSQDIPLEHDSGEPHEQSNSEESKDLDDVS). The span at 154–168 (EDNENNSSEEEEERE) shows a compositional bias: acidic residues. Positions 311–321 (PPQSITFNSSQ) are enriched in polar residues. Residues 722–731 (AVEEGNSGSQ) show a composition bias toward polar residues. Basic and acidic residues predominate over residues 734–755 (PLEHDSGEPHEQSNSEESKDLD). The I-domain stretch occupies residues 819 to 914 (APMEAEAQCA…VSAMEILNEF (96 aa)). The Mg(2+) site is built by Glu-822, Glu-824, Asp-843, and Asp-845. The interval 853-869 (HVYKNFFSQNKHVEYYQ) is DNA-binding; may bind to the undamaged single-strand DNA of the DNA repair bubble. The segment at 881 to 913 (RSKLINLAYLLGSDYTEGIPTVGYVSAMEILNE) is DNA-binding; H2TH (helix-2turn-helix) motif which binds double-stranded DNA. Residue Asp-894 coordinates Mg(2+). A DNA-binding; may bind double-stranded DNA region spans residues 945–951 (TKVKKKL). The interval 1075 to 1196 (CTNQRKGQKT…KTMKETVKRK (122 aa)) is disordered. Positions 1079–1095 (RKGQKTNTKSQGTKRRK) match the Nuclear localization signal 1 motif. The segment covering 1119–1130 (SSKAYSSDGSSS) has biased composition (low complexity). Positions 1142 to 1158 (KQSQSGIVGRQKASNKV) are enriched in polar residues. Positions 1179–1196 (FQGKKTKSKTMKETVKRK) match the Nuclear localization signal 2 motif.

The protein belongs to the XPG/RAD2 endonuclease family. XPG subfamily. In terms of assembly, monomer. Homodimer. It depends on Mg(2+) as a cofactor.

It localises to the nucleus. The protein localises to the chromosome. Functionally, single-stranded structure-specific DNA endonuclease involved in DNA excision repair. Makes the 3'incision in DNA nucleotide excision repair (NER). Binds and bends DNA repair bubble substrate and breaks base stacking at the single-strand/double-strand DNA junction of the DNA bubble. Plays a role in base excision repair (BER) by promoting the binding of DNA glycosylase to its substrate and increasing DNA glycosylase catalytic activity that removes oxidized pyrimidines from DNA. Involved in transcription-coupled nucleotide excision repair (TCR) which allows RNA polymerase II-blocking lesions to be rapidly removed from the transcribed strand of active genes. Required for DNA replication fork maintenance and preservation of genomic stability. Involved in homologous recombination repair (HRR) induced by DNA replication stress. During HRR, binds to the replication fork with high specificity and stabilizes it. This chain is DNA excision repair protein ERCC-5 homolog (ercc5), found in Xenopus laevis (African clawed frog).